The primary structure comprises 93 residues: Small ribosomal subunit protein uS19 (93 aa).

The protein belongs to the universal ribosomal protein uS19 family.

Its function is as follows. Protein S19 forms a complex with S13 that binds strongly to the 16S ribosomal RNA. The protein is Small ribosomal subunit protein uS19 of Campylobacter fetus subsp. fetus (strain 82-40).